A 551-amino-acid chain; its full sequence is Dihydroxy-acid dehydratase (551 aa).

Aspartate 78 is a binding site for Mg(2+). A [2Fe-2S] cluster-binding site is contributed by cysteine 119. Positions 120 and 121 each coordinate Mg(2+). Lysine 121 bears the N6-carboxylysine mark. Cysteine 191 contributes to the [2Fe-2S] cluster binding site. Glutamate 441 lines the Mg(2+) pocket. The active-site Proton acceptor is serine 467.

The protein belongs to the IlvD/Edd family. Homodimer. Requires [2Fe-2S] cluster as cofactor. Mg(2+) serves as cofactor.

It catalyses the reaction (2R)-2,3-dihydroxy-3-methylbutanoate = 3-methyl-2-oxobutanoate + H2O. It carries out the reaction (2R,3R)-2,3-dihydroxy-3-methylpentanoate = (S)-3-methyl-2-oxopentanoate + H2O. It functions in the pathway amino-acid biosynthesis; L-isoleucine biosynthesis; L-isoleucine from 2-oxobutanoate: step 3/4. Its pathway is amino-acid biosynthesis; L-valine biosynthesis; L-valine from pyruvate: step 3/4. Functionally, functions in the biosynthesis of branched-chain amino acids. Catalyzes the dehydration of (2R,3R)-2,3-dihydroxy-3-methylpentanoate (2,3-dihydroxy-3-methylvalerate) into 2-oxo-3-methylpentanoate (2-oxo-3-methylvalerate) and of (2R)-2,3-dihydroxy-3-methylbutanoate (2,3-dihydroxyisovalerate) into 2-oxo-3-methylbutanoate (2-oxoisovalerate), the penultimate precursor to L-isoleucine and L-valine, respectively. This Pyrococcus abyssi (strain GE5 / Orsay) protein is Dihydroxy-acid dehydratase.